An 857-amino-acid polypeptide reads, in one-letter code: Linoleate 9S-lipoxygenase 6 (857 aa).

The 131-residue stretch at 26–156 folds into the PLAT domain; that stretch reads NALDFTDLAG…RYKSDRIFFA (131 aa). The 699-residue stretch at 159 to 857 folds into the Lipoxygenase domain; the sequence is PYLPSETPEL…GKGIPNSVSI (699 aa). Residues 205 to 243 are disordered; it reads NPDQGEQNVRTTLGGSADYPYPRRGRTGRPPTRTDPKSE. Over residues 208-218 the composition is skewed to polar residues; it reads QGEQNVRTTLG. Positions 518, 523, 709, 713, and 857 each coordinate Fe cation.

The protein belongs to the lipoxygenase family. Monomer. Requires Fe cation as cofactor. In terms of tissue distribution, expressed in tubers and roots. Detected in leaves, petioles and stems.

It localises to the cytoplasm. The enzyme catalyses (9Z,12Z)-octadecadienoate + O2 = (9S)-hydroperoxy-(10E,12Z)-octadecadienoate. It participates in lipid metabolism; oxylipin biosynthesis. Its function is as follows. Plant lipoxygenases may be involved in a number of diverse aspects of plant physiology including growth and development, pest resistance, and senescence or responses to wounding. Catalyzes the hydroperoxidation of lipids containing a cis,cis-1,4-pentadiene structure. Linoleic and linolenic acids are the preferred substrates, but is also active with arachidonic acid. The products are almost exclusively the S enantiomers. The chain is Linoleate 9S-lipoxygenase 6 (LOX1.6) from Solanum tuberosum (Potato).